The following is a 371-amino-acid chain: Glutamate 5-kinase 2 (371 aa).

An ATP-binding site is contributed by Lys-13. Residues Ser-53, Asp-140, and Asn-152 each coordinate substrate. Residues 172-173 (SD) and 214-220 (TGGMRSK) each bind ATP. In terms of domain architecture, PUA spans 280 to 356 (EGEMILSDDC…KELTNRALID (77 aa)).

This sequence belongs to the glutamate 5-kinase family.

It localises to the cytoplasm. It catalyses the reaction L-glutamate + ATP = L-glutamyl 5-phosphate + ADP. It functions in the pathway amino-acid biosynthesis; L-proline biosynthesis; L-glutamate 5-semialdehyde from L-glutamate: step 1/2. Its function is as follows. Catalyzes the transfer of a phosphate group to glutamate to form L-glutamate 5-phosphate. In Bacillus subtilis (strain 168), this protein is Glutamate 5-kinase 2 (proJ).